We begin with the raw amino-acid sequence, 181 residues long: Transcription termination/antitermination protein NusG (181 aa).

In terms of domain architecture, KOW spans proline 130 to serine 161.

It belongs to the NusG family. As to quaternary structure, monomer. Interacts with the transcription termination factor Rho and with RNA polymerase.

In terms of biological role, participates in transcription elongation, termination and antitermination. In the absence of Rho, increases the rate of transcription elongation by the RNA polymerase (RNAP), probably by partially suppressing pausing. In the presence of Rho, modulates most Rho-dependent termination events by interacting with the RNAP to render the complex more susceptible to the termination activity of Rho. May be required to overcome a kinetic limitation of Rho to function at certain terminators. Also involved in ribosomal RNA transcriptional antitermination. In Salmonella typhi, this protein is Transcription termination/antitermination protein NusG.